Here is a 333-residue protein sequence, read N- to C-terminus: uncharacterized protein (333 aa).

This is an uncharacterized protein from Ictalurid herpesvirus 1 (strain Auburn) (IcHV-1).